We begin with the raw amino-acid sequence, 476 residues long: Probable rhodanese domain-containing dual specificity protein phosphatase (476 aa).

The 159-residue stretch at 32–190 folds into the Rhodanese domain; the sequence is IGSSKIIIDL…FQKDYSFMCN (159 aa). A Tyrosine-protein phosphatase domain is found at 208–350; that stretch reads YPSEIIKDFL…LKDYQQHLTL (143 aa). The Phosphocysteine intermediate role is filled by Cys-294. Residues 425-436 are compositionally biased toward low complexity; that stretch reads KTTTSSTTINNK. Residues 425–476 are disordered; that stretch reads KTTTSSTTINNKGQQQDKAQEEKDSIFSYADKQEKMTHPTLHSPIELPQSSL. The segment covering 442–461 has biased composition (basic and acidic residues); sequence KAQEEKDSIFSYADKQEKMT.

This sequence belongs to the protein-tyrosine phosphatase family. Non-receptor class dual specificity subfamily.

It catalyses the reaction O-phospho-L-tyrosyl-[protein] + H2O = L-tyrosyl-[protein] + phosphate. It carries out the reaction O-phospho-L-seryl-[protein] + H2O = L-seryl-[protein] + phosphate. The enzyme catalyses O-phospho-L-threonyl-[protein] + H2O = L-threonyl-[protein] + phosphate. Its function is as follows. Has a dual specificity toward Ser/Thr and Tyr-containing proteins. This chain is Probable rhodanese domain-containing dual specificity protein phosphatase, found in Dictyostelium discoideum (Social amoeba).